We begin with the raw amino-acid sequence, 241 residues long: Purine nucleoside phosphorylase DeoD-type (241 aa).

Position 5 (H5) interacts with a purine D-ribonucleoside. Phosphate is bound by residues G21, R25, R44, and 88-91 (RVGS). A purine D-ribonucleoside-binding positions include 180-182 (EME) and 204-205 (SD). D205 functions as the Proton donor in the catalytic mechanism.

The protein belongs to the PNP/UDP phosphorylase family. Homohexamer; trimer of homodimers.

The enzyme catalyses a purine D-ribonucleoside + phosphate = a purine nucleobase + alpha-D-ribose 1-phosphate. It carries out the reaction a purine 2'-deoxy-D-ribonucleoside + phosphate = a purine nucleobase + 2-deoxy-alpha-D-ribose 1-phosphate. Catalyzes the reversible phosphorolytic breakdown of the N-glycosidic bond in the beta-(deoxy)ribonucleoside molecules, with the formation of the corresponding free purine bases and pentose-1-phosphate. The protein is Purine nucleoside phosphorylase DeoD-type of Yersinia enterocolitica serotype O:8 / biotype 1B (strain NCTC 13174 / 8081).